The chain runs to 455 residues: Probable glucarate dehydratase (455 aa).

Positions 42, 113, 160, and 215 each coordinate substrate. The Proton acceptor role is filled by Lys-217. Mg(2+) is bound by residues Asp-245, Glu-276, and Asn-299. Residue 245-247 (DPN) participates in substrate binding. Substrate is bound by residues Asn-299, 349–351 (HSN), His-378, and Arg-431. Residue His-349 is the Proton acceptor of the active site.

This sequence belongs to the mandelate racemase/muconate lactonizing enzyme family. GlucD subfamily. Mg(2+) serves as cofactor.

The catalysed reaction is D-glucarate = 5-dehydro-4-deoxy-D-glucarate + H2O. The protein operates within carbohydrate acid metabolism; D-glucarate degradation; 2,5-dioxopentanoate from D-glucarate: step 1/2. Functionally, catalyzes the dehydration of glucarate to 5-keto-4-deoxy-D-glucarate (5-kdGluc). The polypeptide is Probable glucarate dehydratase (gudD) (Bacillus subtilis (strain 168)).